A 595-amino-acid chain; its full sequence is L-allo-isoleucine:holo-[CmaA peptidyl-carrier protein] ligase (595 aa).

The region spanning 507–582 is the Carrier domain; it reads VVSPQAGSAV…EWVQYYATHA (76 aa). Residue Ser-542 is modified to O-(pantetheine 4'-phosphoryl)serine.

This sequence belongs to the ATP-dependent AMP-binding enzyme family. As to quaternary structure, homodimer. The cofactor is pantetheine 4'-phosphate.

The catalysed reaction is L-alloisoleucine + holo-[CmaA peptidyl-carrier protein] + ATP = L-alloisoleucyl-[CmaA peptidyl-carrier protein] + AMP + diphosphate. Its function is as follows. Involved in the biosynthesis of the phytotoxin coronatine (COR) which mimics the plant hormone jasmonic acid isoleucine and promotes opening of stomata for bacterial entry, bacterial growth in the apoplast, systemic susceptibility, and disease symptoms. CmaA catalyzes the adenylation of L-allo-isoleucine (via the A domain) and the attachment of L-allo-isoleucine to the 4'-phosphopantetheine arm located within the T domain of CmaA. It can also use L-isoleucine, L-leucine and L-valine as substrates. The sequence is that of L-allo-isoleucine:holo-[CmaA peptidyl-carrier protein] ligase from Pseudomonas savastanoi pv. glycinea (Pseudomonas syringae pv. glycinea).